The following is a 291-amino-acid chain: Popeye domain-containing protein 3 (291 aa).

The N-linked (GlcNAc...) asparagine glycan is linked to Asn4. 3 helical membrane passes run Gly27–Gly44, Phe48–Val70, and Ile77–Val99.

Belongs to the popeye family. Expressed in cardiac and skeletal muscle.

It is found in the membrane. In terms of biological role, may play a role in the maintenance of heart function mediated, at least in part, through cAMP-binding. May play a role in the regulation of KCNK2-mediated current amplitude. The sequence is that of Popeye domain-containing protein 3 (Popdc3) from Mus musculus (Mouse).